The following is a 250-amino-acid chain: Aliphatic sulfonates import ATP-binding protein SsuB 2 (250 aa).

The region spanning 13-229 (VRLQGLTRSF…SYRDPLLGEY (217 aa)) is the ABC transporter domain. Position 45-52 (45-52 (GHSGSGKS)) interacts with ATP.

The protein belongs to the ABC transporter superfamily. Aliphatic sulfonates importer (TC 3.A.1.17.2) family. In terms of assembly, the complex is composed of two ATP-binding proteins (SsuB), two transmembrane proteins (SsuC) and a solute-binding protein (SsuA).

It is found in the cell membrane. It carries out the reaction ATP + H2O + aliphatic sulfonate-[sulfonate-binding protein]Side 1 = ADP + phosphate + aliphatic sulfonateSide 2 + [sulfonate-binding protein]Side 1.. Its function is as follows. Part of the ABC transporter complex SsuABC involved in aliphatic sulfonates import. Responsible for energy coupling to the transport system. This is Aliphatic sulfonates import ATP-binding protein SsuB 2 from Streptomyces avermitilis (strain ATCC 31267 / DSM 46492 / JCM 5070 / NBRC 14893 / NCIMB 12804 / NRRL 8165 / MA-4680).